The sequence spans 128 residues: MENVPNVYFNPVFIEPTFKHSLLSVYKHRLIVLFEVFVVFILIYVFFRSELNMFFMPKRKIPDPIDRLRRANLACEDDKLMIYGLPWMTTQTSALSINSKPIVYKDCAKLLRSINGSQPVSLNDVLRR.

Residues 1–30 lie on the Intravirion side of the membrane; it reads MENVPNVYFNPVFIEPTFKHSLLSVYKHRL. A helical; Signal-anchor for type III membrane protein transmembrane segment spans residues 31-51; it reads IVLFEVFVVFILIYVFFRSEL. Topologically, residues 52-107 are virion surface; that stretch reads NMFFMPKRKIPDPIDRLRRANLACEDDKLMIYGLPWMTTQTSALSINSKPIVYKDC. Residues C75 and C107 are joined by a disulfide bond.

It belongs to the orthopoxvirus OPG099 family. As to quaternary structure, interacts with OPG086. Component of the entry fusion complex (EFC) composed of OPG053, OPG076, OPG086, OPG094, OPG095, OPG099, OPG107, OPG143, OPG104J5, OPG147 and OPG155. Except for OPG095 and OPG053, each of the EFC proteins is required for assembly or stability of the complex. Most cysteines are linked by disulfide bonds. They are created by the viral disulfide bond formation pathway, a poxvirus-specific redox pathway that operates on the cytoplasmic side of the MV membranes. Post-translationally, unglycosylated because produced in viral factories instead of the classic ER -Golgi route.

Its subcellular location is the virion membrane. In terms of biological role, component of the entry fusion complex (EFC), which consists of 11 proteins. During cell infection, this complex mediates entry of the virion core into the host cytoplasm by a two-step mechanism consisting of lipid mixing of the viral and cellular membranes and subsequent pore formation. This Vaccinia virus (strain Copenhagen) (VACV) protein is Entry-fusion complex protein OPG094 (OPG099).